Here is a 255-residue protein sequence, read N- to C-terminus: 5'-nucleotidase SurE (255 aa).

A divalent metal cation-binding residues include aspartate 8, aspartate 9, serine 39, and asparagine 95.

It belongs to the SurE nucleotidase family. The cofactor is a divalent metal cation.

The protein localises to the cytoplasm. It catalyses the reaction a ribonucleoside 5'-phosphate + H2O = a ribonucleoside + phosphate. Its function is as follows. Nucleotidase that shows phosphatase activity on nucleoside 5'-monophosphates. This chain is 5'-nucleotidase SurE, found in Herpetosiphon aurantiacus (strain ATCC 23779 / DSM 785 / 114-95).